The following is a 372-amino-acid chain: Trihelix transcription factor GT-4 (372 aa).

In terms of domain architecture, Myb-like spans alanine 47–leucine 111. Serine 167 is modified (phosphoserine).

The protein resides in the nucleus. In terms of biological role, probable transcription factor that binds specific DNA sequence. The polypeptide is Trihelix transcription factor GT-4 (GT-4) (Arabidopsis thaliana (Mouse-ear cress)).